Here is a 159-residue protein sequence, read N- to C-terminus: Bacterioferritin (159 aa).

The region spanning Met1–Gly145 is the Ferritin-like diiron domain. The Fe cation site is built by Glu18 and Glu51. A heme b-binding site is contributed by Met52. 4 residues coordinate Fe cation: His54, Glu94, Glu127, and His130.

Belongs to the bacterioferritin family. As to quaternary structure, homooligomer of 24 subunits, arranged as 12 dimers, that are packed together to form an approximately spherical molecule with a central cavity, in which large amounts of iron can be deposited. Requires heme b as cofactor.

The protein localises to the cytoplasm. The protein resides in the cytosol. It is found in the membrane. It catalyses the reaction 4 Fe(2+) + O2 + 4 H(+) = 4 Fe(3+) + 2 H2O. The enzyme catalyses Fe(2+)(in) = Fe(2+)(out). In terms of biological role, iron-storage protein, whose ferroxidase center binds Fe(2+), oxidizes it using dioxygen to Fe(3+), and participates in the subsequent Fe(3+) oxide mineral core formation within the central cavity of the BFR protein shell. Probably plays a crucial role in the intracellular existence of this organism by functioning as a temporary depository for iron in iron deprivation. The protein is Bacterioferritin (bfr) of Mycobacterium leprae (strain TN).